The chain runs to 1871 residues: Plexin-A3 (1871 aa).

Positions 1 to 19 (MPSVCLLLLLFLAVGGALG) are cleaved as a signal peptide. A Sema domain is found at 20 to 488 (NRPFRAFVVT…SEKQVSQLPV (469 aa)). At 20 to 1220 (NRPFRAFVVT…SAERALTLPA (1201 aa)) the chain is on the extracellular side. An N-linked (GlcNAc...) asparagine glycan is attached at Asn-59. 9 disulfides stabilise this stretch: Cys-77–Cys-86, Cys-112–Cys-120, Cys-266–Cys-387, Cys-282–Cys-338, Cys-356–Cys-375, Cys-491–Cys-508, Cys-497–Cys-539, Cys-500–Cys-517, and Cys-511–Cys-523. Asn-548 carries N-linked (GlcNAc...) asparagine glycosylation. Cys-574 and Cys-594 are disulfide-bonded. N-linked (GlcNAc...) asparagine glycosylation is found at Asn-637, Asn-738, and Asn-746. 4 IPT/TIG domains span residues 840–933 (PRIT…YSFV), 935–1020 (PTFD…YTYT), 1023–1122 (PTVT…FTYY), and 1125–1211 (PSFE…LHIS). 5 N-linked (GlcNAc...) asparagine glycosylation sites follow: Asn-1009, Asn-1036, Asn-1073, Asn-1115, and Asn-1162. The helical transmembrane segment at 1221–1241 (MMGLAAGGGLLLLAITAVLVA) threads the bilayer. The Cytoplasmic portion of the chain corresponds to 1242–1871 (YKRKTQDADR…QIISLVSSDS (630 aa)). Phosphoserine is present on Ser-1596.

It belongs to the plexin family. As to quaternary structure, interacts with CBFA2T3/MTG16.

It is found in the cell membrane. Its function is as follows. Coreceptor for SEMA3A and SEMA3F. Necessary for signaling by class 3 semaphorins and subsequent remodeling of the cytoskeleton. Plays a role in axon guidance in the developing nervous system. Regulates the migration of sympathetic neurons, but not of neural crest precursors. Required for normal dendrite spine morphology in pyramidal neurons. May play a role in regulating semaphorin-mediated programmed cell death in the developing nervous system. Class 3 semaphorins bind to a complex composed of a neuropilin and a plexin. The plexin modulates the affinity of the complex for specific semaphorins, and its cytoplasmic domain is required for the activation of down-stream signaling events in the cytoplasm. The protein is Plexin-A3 (PLXNA3) of Homo sapiens (Human).